Reading from the N-terminus, the 466-residue chain is ATP synthase subunit beta (466 aa).

155-162 (GGAGVGKT) contributes to the ATP binding site.

Belongs to the ATPase alpha/beta chains family. In terms of assembly, F-type ATPases have 2 components, CF(1) - the catalytic core - and CF(0) - the membrane proton channel. CF(1) has five subunits: alpha(3), beta(3), gamma(1), delta(1), epsilon(1). CF(0) has three main subunits: a(1), b(2) and c(9-12). The alpha and beta chains form an alternating ring which encloses part of the gamma chain. CF(1) is attached to CF(0) by a central stalk formed by the gamma and epsilon chains, while a peripheral stalk is formed by the delta and b chains.

It is found in the cell inner membrane. The enzyme catalyses ATP + H2O + 4 H(+)(in) = ADP + phosphate + 5 H(+)(out). In terms of biological role, produces ATP from ADP in the presence of a proton gradient across the membrane. The catalytic sites are hosted primarily by the beta subunits. The protein is ATP synthase subunit beta of Bordetella petrii (strain ATCC BAA-461 / DSM 12804 / CCUG 43448).